The sequence spans 436 residues: Adenosylhomocysteinase (436 aa).

3 residues coordinate substrate: Thr-62, Asp-136, and Glu-161. 162–164 (TTT) lines the NAD(+) pocket. Residues Lys-191 and Asp-195 each contribute to the substrate site. Residues Asn-196, 225–230 (GFGDVG), Glu-248, Asn-283, 304–306 (IGH), and Asn-352 each bind NAD(+).

The protein belongs to the adenosylhomocysteinase family. NAD(+) is required as a cofactor.

The protein localises to the cytoplasm. The catalysed reaction is S-adenosyl-L-homocysteine + H2O = L-homocysteine + adenosine. Its pathway is amino-acid biosynthesis; L-homocysteine biosynthesis; L-homocysteine from S-adenosyl-L-homocysteine: step 1/1. May play a key role in the regulation of the intracellular concentration of adenosylhomocysteine. The sequence is that of Adenosylhomocysteinase from Leptospira borgpetersenii serovar Hardjo-bovis (strain JB197).